Here is a 300-residue protein sequence, read N- to C-terminus: MNQSYGRLVSRAAIAATAMASLLLLIKIFAWWYTGSVSILAALVDSLVDIGASLTNLLVVRYSLQPADDNHSFGHGKAESLAALAQSMFISGSALFLFLTGIQHLVSPTPMTDPGVGVIVTIVALICTIILVSFQRWVVRRTQSQAVRADMLHYQSDVMMNGAILLALGLSWYGWHRADALFALGIGIYILYSALRMGYEAVQSLLDRALPDEERQEIIDIVTSWPGVSGAHDLRTRQSGPTRFIQIHLEMEDSLPLVQAHMVADQVEQAILRRFPGSDVIIHQDPCSVVPREGKRSMLS.

A run of 4 helical transmembrane segments spans residues 12-32 (AAIA…FAWW), 39-59 (ILAA…NLLV), 82-102 (AALA…LTGI), and 114-134 (PGVG…LVSF). Residues D45 and D49 each coordinate Zn(2+). Zn(2+)-binding residues include H153 and D157. 2 helical membrane passes run 156–176 (SDVM…YGWH) and 178–198 (ADAL…LRMG).

This sequence belongs to the cation diffusion facilitator (CDF) transporter (TC 2.A.4) family. FieF subfamily. Homodimer.

The protein resides in the cell inner membrane. The catalysed reaction is Zn(2+)(in) + H(+)(out) = Zn(2+)(out) + H(+)(in). It carries out the reaction Cd(2+)(in) + H(+)(out) = Cd(2+)(out) + H(+)(in). The enzyme catalyses Fe(2+)(in) + H(+)(out) = Fe(2+)(out) + H(+)(in). Functionally, divalent metal cation transporter which exports Zn(2+), Cd(2+) and possibly Fe(2+). May be involved in zinc and iron detoxification by efflux. The protein is Cation-efflux pump FieF of Escherichia coli O7:K1 (strain IAI39 / ExPEC).